Consider the following 192-residue polypeptide: Ribosomal RNA small subunit methyltransferase G (192 aa).

Residues Gly-63, Leu-68, 112–113 (IE), and Arg-125 each bind S-adenosyl-L-methionine.

This sequence belongs to the methyltransferase superfamily. RNA methyltransferase RsmG family.

It localises to the cytoplasm. It catalyses the reaction guanosine(527) in 16S rRNA + S-adenosyl-L-methionine = N(7)-methylguanosine(527) in 16S rRNA + S-adenosyl-L-homocysteine. In terms of biological role, specifically methylates the N7 position of guanine in position 527 of 16S rRNA. This chain is Ribosomal RNA small subunit methyltransferase G, found in Rickettsia rickettsii (strain Iowa).